The following is a 186-amino-acid chain: dCTP deaminase (186 aa).

Position 107-112 (107-112) interacts with dCTP; that stretch reads KSTYAR. The Proton donor/acceptor role is filled by E133. The dCTP site is built by Q152, Y166, and Q176.

Belongs to the dCTP deaminase family. As to quaternary structure, homotrimer.

The catalysed reaction is dCTP + H2O + H(+) = dUTP + NH4(+). It functions in the pathway pyrimidine metabolism; dUMP biosynthesis; dUMP from dCTP (dUTP route): step 1/2. Functionally, catalyzes the deamination of dCTP to dUTP. This chain is dCTP deaminase, found in Campylobacter concisus (strain 13826).